Here is a 435-residue protein sequence, read N- to C-terminus: D-amino acid dehydrogenase (435 aa).

An FAD-binding site is contributed by 3 to 17 (VLILGSGVIGTTSAW).

Belongs to the DadA oxidoreductase family. It depends on FAD as a cofactor.

The enzyme catalyses a D-alpha-amino acid + A + H2O = a 2-oxocarboxylate + AH2 + NH4(+). The protein operates within amino-acid degradation; D-alanine degradation; NH(3) and pyruvate from D-alanine: step 1/1. Its function is as follows. Oxidative deamination of D-amino acids. The protein is D-amino acid dehydrogenase of Xylella fastidiosa (strain M12).